The chain runs to 1429 residues: Protein lin-12 (1429 aa).

The first 15 residues, 1 to 15 (MRIPTICFLFLLISL), serve as a signal peptide directing secretion. Residues 16 to 908 (SKSLHIGSCL…GNNTGFLSWN (893 aa)) lie on the Extracellular side of the membrane. EGF-like domains follow at residues 20 to 61 (HIGS…EYCE) and 114 to 150 (TQGW…ERCE). 9 disulfide bridges follow: C24–C35, C29–C49, C51–C60, C118–C129, C123–C138, C140–C149, C156–C169, C163–C178, and C180–C189. A glycan (N-linked (GlcNAc...) asparagine) is linked at N41. In terms of domain architecture, EGF-like 3; calcium-binding spans 152–190 (DVNECEENKNACGNRSTCMNTLGTYICVCPQGFLPPDCL). N165 carries an N-linked (GlcNAc...) asparagine glycan. Residue N194 is glycosylated (N-linked (GlcNAc...) asparagine). EGF-like domains are found at residues 201-246 (KQPV…STCE), 250-285 (KEDS…SYCQ), 287-323 (GKDN…PYCE), and 323-363 (EKMD…ILCE). 30 disulfides stabilise this stretch: C205–C227, C221–C234, C236–C245, C254–C264, C259–C273, C275–C284, C291–C302, C296–C311, C313–C322, C327–C339, C334–C351, C353–C362, C369–C381, C375–C390, C392–C401, C408–C419, C413–C429, C431–C440, C462–C475, C469–C480, C482–C491, C507–C518, C512–C529, C531–C540, C547–C558, C552–C567, C569–C578, C586–C597, C591–C607, and C609–C618. In terms of domain architecture, EGF-like 8; calcium-binding spans 365–402 (DKNECLSENMCLNNGTCVNLPGSFRCDCARGFGGKWCD). N378 is a glycosylation site (N-linked (GlcNAc...) asparagine). EGF-like domains follow at residues 404-441 (PLNM…KRCE), 449-492 (GGVR…NQCE), 503-541 (SENL…DICE), 543-579 (HKDL…NGCE), and 582-619 (KMFR…ARCE). An N-linked (GlcNAc...) asparagine glycan is attached at N515. N-linked (GlcNAc...) asparagine glycosylation is present at N623. 9 cysteine pairs are disulfide-bonded: C638-C661, C643-C656, C652-C668, C678-C702, C684-C697, C693-C709, C716-C742, C724-C737, and C733-C749. 3 LNR repeats span residues 638-674 (CEKR…KREP), 678-709 (CRYG…GMDC), and 716-754 (CPVK…NETN). N751, N754, and N900 each carry an N-linked (GlcNAc...) asparagine glycan. Residues 909–931 (ALLLIGAGCLIVMVVLMLGALPG) traverse the membrane as a helical segment. Residues 932 to 1429 (NRTRKRRMIN…TRYSEPAHYF (498 aa)) are Cytoplasmic-facing. Residues 933 to 952 (RTRKRRMINASVWMPPMENE) form an RAM domain region. ANK repeat units lie at residues 1093–1122 (DENT…DPTI), 1126–1158 (SERS…DIEE), 1162–1194 (NGMT…KVDY), 1206–1236 (KGRT…NKDK), and 1240–1269 (DGKT…SVEA). Residues 1308-1374 (IQHTHQPQPS…TTHTTPTSLN (67 aa)) form a disordered region. Positions 1319 to 1330 (KVTRAPKKQTSR) are enriched in basic residues. Polar residues predominate over residues 1361–1374 (HFMNTTHTTPTSLN).

It belongs to the NOTCH family. As to quaternary structure, may interact with dsl-1. May interact with lag-2. May interact with osm-11. Interacts with sel-10. In terms of assembly, when activated, the lin-12/Notch intracellular domain (NICD) can become a component of a complex consisting of at least the NICD, lag-1 and sel-8/lag-3. The NICD probably facilitates ordered assembly of the ternary complex via allosteric interactions of its RBP-j associated molecule (RAM) domain with lag-1. Upon binding its ligands, it is cleaved (S2 cleavage) in its extracellular domain, close to the transmembrane domain. S2 cleavage is probably mediated by the metalloproteases adm-4 and sup-17. It is then cleaved (S3 cleavage) downstream of its transmembrane domain, releasing it from the cell membrane; S3 cleavage requires a multiprotein gamma-secretase complex, which may include presenilin sel-12.

The protein resides in the apical cell membrane. It is found in the nucleus. In terms of biological role, essential signaling protein which has a major role in many developmental processes; involved in cell fate decisions that require cell-cell interactions. Probable membrane-bound receptor for putative ligands lag-2, apx-1, dsl-1 and osm-11. Upon ligand activation, and releasing from the cell membrane, the lin-12/Notch intracellular domain (NICD) forms a transcriptional activator complex with lag-1 and lag-3 and regulates expression of various genes. Required for ventral cell fates in the postembryonic mesodermal lineage (M lineage) and in uterine precursor cells. Activity in cell fate decisions and tumorigenesis is negatively regulated by sel-10. Best known for involvement in cell-fate decisions during development, but also plays roles in other events. Regulates recovery from the dauer larval state. Modulates chemosensory avoidance of octanol and quiescence during molting. Promotes basement membrane mobility during tissue remodeling. Involved in establishing left-right asymmetry during intestinal organogenesis. This chain is Protein lin-12, found in Caenorhabditis elegans.